A 392-amino-acid chain; its full sequence is Bifunctional enzyme Fae/Hps (392 aa).

A formaldehyde-activating enzyme region spans residues 1–161 (MFQIGEALMG…EESNKSTHAI (161 aa)). The Proton donor role is filled by H17. D19, L48, K66, T68, and Q83 together coordinate substrate. The tract at residues 162–392 (MGFKVTRLWD…IDQFRVMTDF (231 aa)) is 3-hexulose-6-phosphate synthase.

The protein in the N-terminal section; belongs to the formaldehyde-activating enzyme family. This sequence in the C-terminal section; belongs to the HPS/KGPDC family. HPS subfamily.

The catalysed reaction is 5,6,7,8-tetrahydromethanopterin + formaldehyde = 5,10-methylenetetrahydromethanopterin + H2O. The enzyme catalyses D-ribulose 5-phosphate + formaldehyde = D-arabino-hex-3-ulose 6-phosphate. It functions in the pathway carbohydrate biosynthesis; D-ribose 5-phosphate biosynthesis. Its function is as follows. Catalyzes the condensation of formaldehyde with tetrahydromethanopterin (H(4)MPT) to 5,10-methylenetetrahydromethanopterin. Functionally, catalyzes the reversible formation of ribulose-5-phosphate and formaldehyde from 3-hexulose-6-phosphate. The chain is Bifunctional enzyme Fae/Hps from Methanosarcina acetivorans (strain ATCC 35395 / DSM 2834 / JCM 12185 / C2A).